Consider the following 292-residue polypeptide: Pyridoxal 5'-phosphate synthase subunit PdxS (292 aa).

Asp22 lines the D-ribose 5-phosphate pocket. Lys79 (schiff-base intermediate with D-ribose 5-phosphate) is an active-site residue. Gly151 lines the D-ribose 5-phosphate pocket. Arg163 provides a ligand contact to D-glyceraldehyde 3-phosphate. D-ribose 5-phosphate contacts are provided by residues Gly212 and 233–234 (GS).

Belongs to the PdxS/SNZ family. As to quaternary structure, in the presence of PdxT, forms a dodecamer of heterodimers.

The catalysed reaction is aldehydo-D-ribose 5-phosphate + D-glyceraldehyde 3-phosphate + L-glutamine = pyridoxal 5'-phosphate + L-glutamate + phosphate + 3 H2O + H(+). Its pathway is cofactor biosynthesis; pyridoxal 5'-phosphate biosynthesis. Its function is as follows. Catalyzes the formation of pyridoxal 5'-phosphate from ribose 5-phosphate (RBP), glyceraldehyde 3-phosphate (G3P) and ammonia. The ammonia is provided by the PdxT subunit. Can also use ribulose 5-phosphate and dihydroxyacetone phosphate as substrates, resulting from enzyme-catalyzed isomerization of RBP and G3P, respectively. The polypeptide is Pyridoxal 5'-phosphate synthase subunit PdxS (Ruminiclostridium cellulolyticum (strain ATCC 35319 / DSM 5812 / JCM 6584 / H10) (Clostridium cellulolyticum)).